A 329-amino-acid polypeptide reads, in one-letter code: Phosphate acyltransferase (329 aa).

This sequence belongs to the PlsX family. In terms of assembly, homodimer. Probably interacts with PlsY.

The protein resides in the cytoplasm. It carries out the reaction a fatty acyl-[ACP] + phosphate = an acyl phosphate + holo-[ACP]. It functions in the pathway lipid metabolism; phospholipid metabolism. Its function is as follows. Catalyzes the reversible formation of acyl-phosphate (acyl-PO(4)) from acyl-[acyl-carrier-protein] (acyl-ACP). This enzyme utilizes acyl-ACP as fatty acyl donor, but not acyl-CoA. The protein is Phosphate acyltransferase of Campylobacter concisus (strain 13826).